The following is a 187-amino-acid chain: MAERENRRDRRDDRSREETPEFADRLVAINRVSKTVKGGKRFGFAALVVVGDQRGRVGFGKGKAKEVPEAIRKATEQAKRQMIRVALRDGRTLHHDQEGRHGAGKVVMRAAVPGTGIIAGGPMRAVFEMLGIQDVVAKSLGSQNPYNMIRATMDGLKRESSPRQVAQRRGKKVADILKKPEAEVAEA.

The disordered stretch occupies residues 1–20; sequence MAERENRRDRRDDRSREETP. The 64-residue stretch at 22–85 folds into the S5 DRBM domain; it reads FADRLVAINR…EQAKRQMIRV (64 aa).

The protein belongs to the universal ribosomal protein uS5 family. Part of the 30S ribosomal subunit. Contacts proteins S4 and S8.

Functionally, with S4 and S12 plays an important role in translational accuracy. Located at the back of the 30S subunit body where it stabilizes the conformation of the head with respect to the body. This is Small ribosomal subunit protein uS5 from Cereibacter sphaeroides (strain ATCC 17029 / ATH 2.4.9) (Rhodobacter sphaeroides).